Here is a 451-residue protein sequence, read N- to C-terminus: Cobyrinate a,c-diamide synthase (451 aa).

Residues 246 to 437 (KIGVAYDEVF…VHTHVAAMPN (192 aa)) enclose the GATase cobBQ-type domain. Cys328 serves as the catalytic Nucleophile.

This sequence belongs to the CobB/CbiA family. Requires Mg(2+) as cofactor.

It catalyses the reaction cob(II)yrinate + 2 L-glutamine + 2 ATP + 2 H2O = cob(II)yrinate a,c diamide + 2 L-glutamate + 2 ADP + 2 phosphate + 2 H(+). The enzyme catalyses Ni-sirohydrochlorin + 2 L-glutamine + 2 ATP + 2 H2O = Ni-sirohydrochlorin a,c-diamide + 2 L-glutamate + 2 ADP + 2 phosphate + 2 H(+). It participates in cofactor biosynthesis; adenosylcobalamin biosynthesis; cob(II)yrinate a,c-diamide from sirohydrochlorin (anaerobic route): step 10/10. Catalyzes the ATP-dependent amidation of the two carboxylate groups at positions a and c of cobyrinate, using either L-glutamine or ammonia as the nitrogen source. Involved in the biosynthesis of the unique nickel-containing tetrapyrrole coenzyme F430, the prosthetic group of methyl-coenzyme M reductase (MCR), which plays a key role in methanogenesis and anaerobic methane oxidation. Catalyzes the ATP-dependent amidation of the two carboxylate groups at positions a and c of Ni-sirohydrochlorin, using L-glutamine or ammonia as the nitrogen source. The chain is Cobyrinate a,c-diamide synthase from Methanobrevibacter smithii (strain ATCC 35061 / DSM 861 / OCM 144 / PS).